A 495-amino-acid polypeptide reads, in one-letter code: Growth/differentiation factor 5 (495 aa).

A signal peptide spans 1 to 27 (MRLPKLLTLLLWHLAWLDLELICTVLG). A propeptide spanning residues 28-375 (APDLGQRTPG…YLFSQRRKRR (348 aa)) is cleaved from the precursor. Positions 30 to 162 (DLGQRTPGAK…KEPFRPPPIT (133 aa)) are disordered. The segment covering 124-137 (GGKASSKAGSAPSS) has biased composition (low complexity). Positions 142 to 156 (KTREPGTPREPKEPF) are enriched in basic and acidic residues. N183 carries N-linked (GlcNAc...) asparagine glycosylation. Cystine bridges form between C394/C460, C423/C492, and C427/C494.

This sequence belongs to the TGF-beta family. Homodimer; disulfide-linked. Interacts with serine proteases, HTRA1 and HTRA3. Following LPS binding, may form a complex with CXCR4, HSP90AA1 and HSPA8. Interacts with high affinity with NOG; inhibits chondrogenesis. Interacts with high affinity with BMPR1B and lower affinity with BMPR1A; positively regulates chondrocyte differentiation and induces SMAD-dependent signaling. Interacts with FBN1 (via N-terminal domain) and FBN2. Interacts with TGFBR3.

It localises to the secreted. Its subcellular location is the cell membrane. In terms of biological role, growth factor involved in bone and cartilage formation. During cartilage development regulates differentiation of chondrogenic tissue through two pathways. Firstly, positively regulates differentiation of chondrogenic tissue through its binding of high affinity with BMPR1B and of less affinity with BMPR1A, leading to induction of SMAD1-SMAD5-SMAD8 complex phosphorylation and then SMAD protein signaling transduction. Secondly, negatively regulates chondrogenic differentiation through its interaction with NOG. Required to prevent excessive muscle loss upon denervation. This function requires SMAD4 and is mediated by phosphorylated SMAD1/5/8. Binds bacterial lipopolysaccharide (LPS) and mediates LPS-induced inflammatory response, including TNF secretion by monocytes. The polypeptide is Growth/differentiation factor 5 (Gdf5) (Mus musculus (Mouse)).